A 376-amino-acid polypeptide reads, in one-letter code: Chaperone protein DnaJ (376 aa).

The 66-residue stretch at 5–70 folds into the J domain; it reads DFYETLGVAK…QKRAAYDRYG (66 aa). The CR-type zinc finger occupies 137–215; that stretch reads GKTAQIRVPT…CHGQGRVTEE (79 aa). The Zn(2+) site is built by Cys150, Cys153, Cys167, Cys170, Cys189, Cys192, Cys203, and Cys206. 4 CXXCXGXG motif repeats span residues 150–157, 167–174, 189–196, and 203–210; these read CDVCSGSG, CGTCQGSG, CPTCHGRG, and CPKCHGQG.

Belongs to the DnaJ family. In terms of assembly, homodimer. Zn(2+) serves as cofactor.

Its subcellular location is the cytoplasm. Participates actively in the response to hyperosmotic and heat shock by preventing the aggregation of stress-denatured proteins and by disaggregating proteins, also in an autonomous, DnaK-independent fashion. Unfolded proteins bind initially to DnaJ; upon interaction with the DnaJ-bound protein, DnaK hydrolyzes its bound ATP, resulting in the formation of a stable complex. GrpE releases ADP from DnaK; ATP binding to DnaK triggers the release of the substrate protein, thus completing the reaction cycle. Several rounds of ATP-dependent interactions between DnaJ, DnaK and GrpE are required for fully efficient folding. Also involved, together with DnaK and GrpE, in the DNA replication of plasmids through activation of initiation proteins. In Rhizobium leguminosarum bv. trifolii (strain WSM2304), this protein is Chaperone protein DnaJ.